A 223-amino-acid polypeptide reads, in one-letter code: Putative nudix hydrolase 2 (223 aa).

In terms of domain architecture, Nudix hydrolase spans 72 to 213 (ASADGVSIIA…SIVVESTLLA (142 aa)). The short motif at 111–132 (GLIDAGETAQQAAIRELKEETG) is the Nudix box element. Mg(2+) is bound by residues Glu-126 and Glu-130.

Belongs to the Nudix hydrolase family. Requires Mg(2+) as cofactor. Mn(2+) is required as a cofactor.

Its function is as follows. Probably mediates the hydrolysis of some nucleoside diphosphate derivatives. This Caenorhabditis elegans protein is Putative nudix hydrolase 2 (ndx-2).